An 801-amino-acid chain; its full sequence is Disks large homolog 4 (801 aa).

Residues 4–60 (KREDTERALQAMEACQSAGDEGFRTRAERLLTIFQSDLFQALLDIQEFYELTVFENQ) enclose the L27 domain. PDZ domains follow at residues 153–240 (EITL…LRHK) and 248–335 (ELKL…AKTL). The segment at 339-373 (HHQDAYNPPDITSSYSPHMDMSDYPQALSPSSPRR) is disordered. The region spanning 393–474 (RVVIHRGSTG…TVTIITQYRP (82 aa)) is the PDZ 3 domain. Positions 507–577 (KRSFFIRALF…PSKRRVERKE (71 aa)) constitute an SH3 domain. Residues 610-786 (ARPVIILGPS…IYHHVKSVIE (177 aa)) enclose the Guanylate kinase-like domain.

This sequence belongs to the MAGUK family. In terms of processing, ubiquitinated by MDM2 in response to NMDA receptor activation, leading to proteasome-mediated degradation of DLG4 which is required for AMPA receptor endocytosis. Palmitoylated. Palmitoylation is required for targeting to postsynaptic density, plasma membrane and synapses.

The protein localises to the cell membrane. It is found in the postsynaptic density. The protein resides in the synapse. In terms of biological role, postsynaptic scaffolding protein that plays a critical role in synaptogenesis and synaptic plasticity by providing a platform for the postsynaptic clustering of crucial synaptic proteins. This is Disks large homolog 4 (dlg4) from Danio rerio (Zebrafish).